The chain runs to 134 residues: ATP synthase epsilon chain, chloroplastic (134 aa).

This sequence belongs to the ATPase epsilon chain family. F-type ATPases have 2 components, CF(1) - the catalytic core - and CF(0) - the membrane proton channel. CF(1) has five subunits: alpha(3), beta(3), gamma(1), delta(1), epsilon(1). CF(0) has three main subunits: a, b and c.

It localises to the plastid. The protein localises to the chloroplast thylakoid membrane. Functionally, produces ATP from ADP in the presence of a proton gradient across the membrane. The chain is ATP synthase epsilon chain, chloroplastic from Nymphaea alba (White water-lily).